The following is a 616-amino-acid chain: UvrABC system protein C (616 aa).

The GIY-YIG domain occupies 11–85; it reads ASPGVYIFRR…IKQHRPHYNV (75 aa). Residues 194–229 form the UVR domain; the sequence is APVIARLKADMQAAARAQDFEQAARLRDRVQAVEKL.

Belongs to the UvrC family. Interacts with UvrB in an incision complex.

The protein resides in the cytoplasm. Functionally, the UvrABC repair system catalyzes the recognition and processing of DNA lesions. UvrC both incises the 5' and 3' sides of the lesion. The N-terminal half is responsible for the 3' incision and the C-terminal half is responsible for the 5' incision. The chain is UvrABC system protein C from Deinococcus geothermalis (strain DSM 11300 / CIP 105573 / AG-3a).